The primary structure comprises 331 residues: Ornithine carbamoyltransferase (331 aa).

Carbamoyl phosphate is bound by residues 55–58 (STRT), Gln82, Arg106, and 133–136 (HPTQ). L-ornithine-binding positions include Asn166, Asp230, and 234–235 (SM). Carbamoyl phosphate contacts are provided by residues 272–273 (CL) and Arg317.

It belongs to the aspartate/ornithine carbamoyltransferase superfamily. OTCase family.

The protein localises to the cytoplasm. It catalyses the reaction carbamoyl phosphate + L-ornithine = L-citrulline + phosphate + H(+). It participates in amino-acid biosynthesis; L-arginine biosynthesis; L-arginine from L-ornithine and carbamoyl phosphate: step 1/3. Reversibly catalyzes the transfer of the carbamoyl group from carbamoyl phosphate (CP) to the N(epsilon) atom of ornithine (ORN) to produce L-citrulline. The sequence is that of Ornithine carbamoyltransferase (argF) from Neisseria gonorrhoeae.